The chain runs to 257 residues: 1-(5-phosphoribosyl)-5-[(5-phosphoribosylamino)methylideneamino] imidazole-4-carboxamide isomerase (257 aa).

D8 serves as the catalytic Proton acceptor. Catalysis depends on D129, which acts as the Proton donor.

Belongs to the HisA/HisF family.

Its subcellular location is the cytoplasm. The catalysed reaction is 1-(5-phospho-beta-D-ribosyl)-5-[(5-phospho-beta-D-ribosylamino)methylideneamino]imidazole-4-carboxamide = 5-[(5-phospho-1-deoxy-D-ribulos-1-ylimino)methylamino]-1-(5-phospho-beta-D-ribosyl)imidazole-4-carboxamide. Its pathway is amino-acid biosynthesis; L-histidine biosynthesis; L-histidine from 5-phospho-alpha-D-ribose 1-diphosphate: step 4/9. The protein is 1-(5-phosphoribosyl)-5-[(5-phosphoribosylamino)methylideneamino] imidazole-4-carboxamide isomerase of Trichodesmium erythraeum (strain IMS101).